The chain runs to 347 residues: Trace amine-associated receptor 4 (347 aa).

Topologically, residues 1 to 37 (MNSPDLWYSPETQFCFAAANNSCPRKARPALVVCAMY) are extracellular. N20 is a glycosylation site (N-linked (GlcNAc...) asparagine). 2 cysteine pairs are disulfide-bonded: C23-C187 and C106-C191. Residues 38-58 (LVMIGAIVMTMLGNMVVIISI) traverse the membrane as a helical segment. Over 59-69 (AHFKQLHSPTN) the chain is Cytoplasmic. The helical transmembrane segment at 70 to 90 (FLILSMATTDFLLSCVVMPFS) threads the bilayer. At 91–110 (MVRSIESCWYFGDLFCKVHS) the chain is on the extracellular side. The helical transmembrane segment at 111 to 129 (CCDIMLCTTSIFHLCFISV) threads the bilayer. Residues 130–149 (DRHYAVCDPLHYVTQITVGV) are Cytoplasmic-facing. Residues 150-170 (VGVFLLISWSVPILFAFGLVF) form a helical membrane-spanning segment. The Extracellular portion of the chain corresponds to 171-197 (SELNLIGAEDFVAAIDCTGLCVLIFNK). Residues 175 to 188 (LIGAEDFVAAIDCT) are extracellular Loop 2 (ECL2). A helical membrane pass occupies residues 198–218 (LWGVLASFIAFFLPGAIMVGI). Topologically, residues 219–260 (YIHIFTVARKHARKIGPGPRTKRALSESKMKATSGKESKATK) are cytoplasmic. A helical transmembrane segment spans residues 261–281 (TLSIVMGVFVLCWLPFFVLTI). Residues 282–296 (TDPFIGFTTPEDLYN) lie on the Extracellular side of the membrane. Residues 297-317 (VFLWLGYFNSTFNPIIYGMFY) form a helical membrane-spanning segment. Topologically, residues 318–347 (PWFRKALRMIVTGTIFRSDSSTSSLHPAHP) are cytoplasmic.

The protein belongs to the G-protein coupled receptor 1 family.

It localises to the cell membrane. Functionally, olfactory receptor specific for 2-phenylethylamine, a trace amine present at high concentration in the urine of carnivore species, playing a key role in fear and avoidance responses. 2-phenylethylamine acts as a kairomone in the chemical detection of carnivore odor and triggers fear in rats. This receptor is probably mediated by the G(s)-class of G-proteins which activate adenylate cyclase. This chain is Trace amine-associated receptor 4, found in Rattus norvegicus (Rat).